The chain runs to 1537 residues: Flocculation protein FLO1 (1537 aa).

The signal sequence occupies residues 1–24 (MTMPHRYMFLAVFTLLALTSVASG). The 176-residue stretch at 74–249 (GGQTDISIDY…GTTVSDDFEG (176 aa)) folds into the PA14 domain. Asparagine 135 and asparagine 187 each carry an N-linked (GlcNAc...) asparagine glycan. The tract at residues 197–240 (GGSLPPNIEGTVYMYAGYYYPMKVVYSNAVSWGTLPISVTLPDG) is sugar recognition. A glycan (N-linked (GlcNAc...) asparagine) is linked at asparagine 262. 18 consecutive repeat copies span residues 278–322 (TTTE…STII), 323–367 (TTTE…TTAI), 368–412 (TTTE…TTAM), 413–457 (TTTQ…TTAM), 458–502 (TTTQ…TTAM), 503–547 (TTTQ…TTAM), 548–592 (TTPQ…TTAI), 593–637 (TTTE…TTAI), 638–682 (TTTQ…TTAM), 683–727 (TTTQ…TTAM), 728–772 (TTTQ…GLIS), 773–817 (TTTE…GLVT), 818–862 (TTTE…GLIS), 863–907 (TTTE…GLIS), 908–952 (TTTE…GLIS), 953–997 (TTTE…GLIS), 998–1042 (TTTE…GLVT), and 1043–1087 (TTTE…ISSS). The 18 X 45 AA approximate tandem repeats, Thr-rich stretch occupies residues 278–1087 (TTTEPWTGTF…KTPTTAISSS (810 aa)). N-linked (GlcNAc...) asparagine glycosylation is found at asparagine 329, asparagine 374, asparagine 419, asparagine 464, asparagine 509, asparagine 554, asparagine 599, asparagine 644, asparagine 689, and asparagine 734. Disordered stretches follow at residues 770-799 (LISTTTEPWTGTFTSTSTEMTTVTGTNGQP) and 860-889 (LISTTTEPWTGTFTSTSTEMTTITGTNGQP). Over residues 773–795 (TTTEPWTGTFTSTSTEMTTVTGT) the composition is skewed to low complexity. Low complexity predominate over residues 863–885 (TTTEPWTGTFTSTSTEMTTITGT). A disordered region spans residues 995 to 1024 (LISTTTEPWTGTFTSTSTEMTTVTGTNGQP). Residues 998–1020 (TTTEPWTGTFTSTSTEMTTVTGT) are compositionally biased toward low complexity. Asparagine 1114 is a glycosylation site (N-linked (GlcNAc...) asparagine). Repeat copies occupy residues 1118 to 1137 (VISSSVISSSVTSSLFTSSP) and 1138 to 1157 (VISSSVISSSTTTSTSIFSE). The segment at 1118–1157 (VISSSVISSSVTSSLFTSSPVISSSVISSSTTTSTSIFSE) is 2 X 20 AA approximate tandem repeats, Ser/Thr-rich. Residues 1161–1220 (SSVIPTSSSTSGSSESETSSAGSVSSSSFISSESSKSPTYSSSSLPLVTSATTSQETASS) are compositionally biased toward low complexity. Residues 1161–1232 (SSVIPTSSST…PATTTKTSEQ (72 aa)) are disordered. A compositionally biased stretch (polar residues) spans 1222 to 1232 (PPATTTKTSEQ). Tandem repeats lie at residues 1226–1276 (TTKT…CPIS), 1291–1341 (TTET…CPIS), 1342–1392 (TTES…RPQT), 1408–1416 (ETTTNTLAA), 1417–1425 (ETTTNTVAA), and 1426–1434 (ETITNTGAA). Positions 1226 to 1392 (TTKTSEQTTL…TVYPTWRPQT (167 aa)) are 3 X 51 AA approximate repeats, Ser/Thr-rich. Residues 1392-1404 (TANEESVSSKMNS) are compositionally biased toward polar residues. Residues 1392 to 1414 (TANEESVSSKMNSATGETTTNTL) form a disordered region. The span at 1405 to 1414 (ATGETTTNTL) shows a compositional bias: low complexity. The 3 X 9 AA approximate tandem repeats, Thr-rich stretch occupies residues 1408–1434 (ETTTNTLAAETTTNTVAAETITNTGAA). The interval 1468-1497 (VSVSETGNTKSLTSSGLSTMSQQPRSTPAS) is disordered. Over residues 1472–1497 (ETGNTKSLTSSGLSTMSQQPRSTPAS) the composition is skewed to polar residues. A lipid anchor (GPI-anchor amidated glycine) is attached at glycine 1514. Residues 1515–1537 (SANSLLAGSGLSVFIASLLLAII) constitute a propeptide, removed in mature form.

This sequence belongs to the flocculin family. Extensively N- and O-glycosylated. Post-translationally, the GPI-anchor is attached to the protein in the endoplasmic reticulum and serves to target the protein to the cell surface. There, the glucosamine-inositol phospholipid moiety is cleaved off and the GPI-modified mannoprotein is covalently attached via its lipidless GPI glycan remnant to the 1,6-beta-glucan of the outer cell wall layer.

The protein localises to the cell membrane. The protein resides in the secreted. It localises to the cell wall. Its function is as follows. Cell wall protein that participates directly in adhesive cell-cell interactions during yeast flocculation, a reversible, asexual and Ca(2+)-dependent process in which cells adhere to form aggregates (flocs) consisting of thousands of cells. The lectin-like protein sticks out of the cell wall of flocculent cells and selectively binds mannose residues in the cell walls of adjacent cells. Activity is inhibited by mannose, but not by glucose, maltose, sucrose or galactose. Also involved in cell-substrate adhesion. The chain is Flocculation protein FLO1 (FLO1) from Saccharomyces cerevisiae (strain ATCC 204508 / S288c) (Baker's yeast).